The primary structure comprises 176 residues: Oleosin Ara h 14.0102 (176 aa).

Alanine 2 is modified (N-acetylalanine; alternate). The next 2 membrane-spanning stretches (helical) occupy residues 61–81 and 87–107; these read GTLLLLSGLSLLGTIIGLAIA and FFSPVIVPAVVTIGLAVIGIL. Residues 156–176 are disordered; the sequence is KTKDAGQEIQTKAQDVKRSSS.

This sequence belongs to the oleosin family. As to quaternary structure, homodimer. Forms oligomers. As to expression, expressed in seeds (at protein level). Not expressed in leaves.

It is found in the lipid droplet. It localises to the membrane. May have a structural role to stabilize the lipid body during desiccation of the seed by preventing coalescence of the oil. Probably interacts with both lipid and phospholipid moieties of lipid bodies. May also provide recognition signals for specific lipase anchorage in lipolysis during seedling growth. This is Oleosin Ara h 14.0102 from Arachis hypogaea (Peanut).